Reading from the N-terminus, the 582-residue chain is Aspartate--tRNA ligase (582 aa).

Glu-174 provides a ligand contact to L-aspartate. Residues 198 to 201 (QITK) form an aspartate region. Arg-220 lines the L-aspartate pocket. ATP-binding positions include 220–222 (RDE) and Gln-229. Position 443 (His-443) interacts with L-aspartate. Residue Glu-477 participates in ATP binding. L-aspartate is bound at residue Arg-484. ATP is bound at residue 529–532 (GLDR).

The protein belongs to the class-II aminoacyl-tRNA synthetase family. Type 1 subfamily. In terms of assembly, homodimer.

It localises to the cytoplasm. It carries out the reaction tRNA(Asp) + L-aspartate + ATP = L-aspartyl-tRNA(Asp) + AMP + diphosphate. Its function is as follows. Catalyzes the attachment of L-aspartate to tRNA(Asp) in a two-step reaction: L-aspartate is first activated by ATP to form Asp-AMP and then transferred to the acceptor end of tRNA(Asp). The polypeptide is Aspartate--tRNA ligase (Streptococcus pyogenes serotype M1).